Here is a 471-residue protein sequence, read N- to C-terminus: Histone deacetylase 6 (471 aa).

Met1 carries the post-translational modification N-acetylmethionine. Residues 20–333 (RVSYFYEPTI…WCYETAVAVG (314 aa)) form a histone deacetylase region. The Proton donor/acceptor role is filled by His153. 3 residues coordinate Zn(2+): Asp188, His190, and Asp276. The disordered stretch occupies residues 389-471 (PSVQFQHTPP…PEPDVNPPSS (83 aa)). Over residues 453–463 (GEDEMDDDNPE) the composition is skewed to acidic residues.

The protein belongs to the histone deacetylase family. HD type 1 subfamily. Interacts with Coi1, which functions in an SCF complex that recruits regulators for ubiquitination. Interacts with AHL22. Interacts with AS1. Part of the AS1 repressor complex composed of AS1, LBD6/AS2 and HDA6. Binds to EBS and SHL. Interacts with MBD6. Interacts with HDA5. Interacts with FLD. Zn(2+) serves as cofactor. As to expression, not detected in leaves, stems, flowers and young siliques.

It localises to the nucleus. The protein resides in the nucleolus. The enzyme catalyses N(6)-acetyl-L-lysyl-[histone] + H2O = L-lysyl-[histone] + acetate. Inhibited by trichostatin A. Functionally, responsible for the deacetylation of lysine residues on the N-terminal part of the core histones (H2A, H2B, H3 and H4). Might remove acetyl residues only from specific targets, such as rDNA repeats or complex transgenes. Histone deacetylation gives a tag for epigenetic repression and plays an important role in transcriptional regulation, cell cycle progression and developmental events. Histone deacetylases act via the formation of large multiprotein complexes. Required for rRNA gene silencing in nucleolar dominance. Plays a role in transgene silencing, but this effect seems to bee independent of the histone deacetylase activity. Part of the AS1 repressor complex to regulate the KNOX expression in leaf development. Binds to KNAT1, KNAT2, and KNATM chromatin. Involved in the regulation of flowering time. Forms a histone deacetylase complex with HDA5, FLD and MSI4/FVE that represses FLC gene expression to control flowering time. In Arabidopsis thaliana (Mouse-ear cress), this protein is Histone deacetylase 6.